The primary structure comprises 472 residues: Diaminopimelate decarboxylase (472 aa).

Residues 1–23 (MNVHTAGPRHAEKTRHTATPQRV) form a disordered region. At Lys97 the chain carries N6-(pyridoxal phosphate)lysine. Pyridoxal 5'-phosphate is bound by residues Gly283 and 325-328 (EPGR). 3 residues coordinate substrate: Arg328, Arg369, and Tyr373. The active-site Proton donor is Cys400. Residues Glu401 and Tyr430 each coordinate substrate. Residue Tyr430 participates in pyridoxal 5'-phosphate binding.

It belongs to the Orn/Lys/Arg decarboxylase class-II family. LysA subfamily. As to quaternary structure, homodimer. Pyridoxal 5'-phosphate is required as a cofactor.

It catalyses the reaction meso-2,6-diaminopimelate + H(+) = L-lysine + CO2. The protein operates within amino-acid biosynthesis; L-lysine biosynthesis via DAP pathway; L-lysine from DL-2,6-diaminopimelate: step 1/1. Functionally, specifically catalyzes the decarboxylation of meso-diaminopimelate (meso-DAP) to L-lysine. This chain is Diaminopimelate decarboxylase, found in Mycobacterium leprae (strain TN).